A 277-amino-acid chain; its full sequence is Probable endonuclease 4 (277 aa).

Zn(2+) is bound by residues His67, His107, Glu141, Asp173, His176, His207, Asp220, His222, and Glu252.

Belongs to the AP endonuclease 2 family. The cofactor is Zn(2+).

The catalysed reaction is Endonucleolytic cleavage to 5'-phosphooligonucleotide end-products.. Functionally, endonuclease IV plays a role in DNA repair. It cleaves phosphodiester bonds at apurinic or apyrimidinic (AP) sites, generating a 3'-hydroxyl group and a 5'-terminal sugar phosphate. This Finegoldia magna (strain ATCC 29328 / DSM 20472 / WAL 2508) (Peptostreptococcus magnus) protein is Probable endonuclease 4.